A 124-amino-acid chain; its full sequence is Salivary protein 15 Iric-3 (124 aa).

An N-terminal signal peptide occupies residues 1–22 (MESFVAMKVVCIILLFVIAAEA). N-linked (GlcNAc...) asparagine glycosylation is found at Asn-82 and Asn-93. Residues 105–124 (GPNNQTCHKKDECVGYIPGC) form a CD4-binding region.

The protein belongs to the salp15 family. In terms of assembly, interacts with host CD4. Interacts with host DC-SIGN (CD209). Interacts with Borrelia outer surface protein C (OspC). Expressed in salivary glands. Detected in fed adult female.

The protein localises to the secreted. Functionally, salivary tick protein that downregulates host immune system by binding to both dendritic cells, and CD4(+) T cells. Specifically binds to the CD4 coreceptor on T cells. This interaction prevents the activation of the Src kinase, Lck, and its downstream substrate Zap-70, and results in deficient activation of PLCgamma1, the repression of calcium fluxes triggered by T-cell antigen receptor (TCR) ligation, and a subsequent reduction in interleukin-2 production. This salivary protein also binds to DC-SIGN (CD209) on dendritic cells (DC) and activates the Raf-1 kinase/MEK signaling pathway that results in down-regulating expression of pro-inflammatory cytokines. Furthermore, it inhibits T cell proliferation induced by DCs. In addition, it inhibits in vitro keratinocyte inflammation induced by Borrelia burgdorferi or by the major outer surface protein (OspC) of Borrelia. In addition, it downregulates chemokines and monocyte chemoattractant protein 1, as well as several antimicrobial peptides such as defensins, cathelicidin, psoriasin, and RNase 7. Apart from its immunomodulatory activities, it is also associated with protection of Borrelia spirochetes from antibody-mediated killing through its binding to OspC. In vivo, tests on different immune disease animal models show promising therapeutic results, e.g., in inhibiting HIV infection, experimental autoimmune encephalomyelitis, transplantation rejection, and asthma. This Ixodes ricinus (Common tick) protein is Salivary protein 15 Iric-3.